We begin with the raw amino-acid sequence, 763 residues long: Xaa-Pro dipeptidyl-peptidase (763 aa).

Catalysis depends on charge relay system residues S348, D468, and H498.

The protein belongs to the peptidase S15 family. Homodimer.

It is found in the cytoplasm. The catalysed reaction is Hydrolyzes Xaa-Pro-|- bonds to release unblocked, N-terminal dipeptides from substrates including Ala-Pro-|-p-nitroanilide and (sequentially) Tyr-Pro-|-Phe-Pro-|-Gly-Pro-|-Ile.. Its function is as follows. Removes N-terminal dipeptides sequentially from polypeptides having unsubstituted N-termini provided that the penultimate residue is proline. This is Xaa-Pro dipeptidyl-peptidase (pepX) from Lactococcus lactis subsp. cremoris (Streptococcus cremoris).